The sequence spans 315 residues: Calumenin (315 aa).

Positions 1 to 19 (MDLRQFLMCLSLCTAFALS) are cleaved as a signal peptide. S44 is subject to Phosphoserine. At Y47 the chain carries Phosphotyrosine. T65 carries the phosphothreonine modification. EF-hand domains follow at residues 68–103 (ESKERLGKIVSKIDDDKDGFVTVDELKDWIKFAQKR), 104–139 (WIYEDVERQWKGHDLNEDGLVSWEEYKNATYGYVLD), 151–186 (QMMVRDERRFKMADKDGDLIATKEEFTAFLHPEEYD), 188–223 (MKDIVVQETMEDIDKNADGFIDLEEYIGDMYSHDGN), 229–264 (WVKTEREQFVEFRDKNRDGKMDKEETKDWILPSDYD), and 265–300 (HAEAEARHLVYESDQNKDGKLTKEEIVDKYDLFVGS). S69 bears the Phosphoserine mark. Residues D81, D83, D85, E92, D117, N119, D121, and E128 each contribute to the Ca(2+) site. N131 carries an N-linked (GlcNAc...) asparagine glycan. D164 lines the Ca(2+) pocket. Residue K165 is modified to N6-acetyllysine. The Ca(2+) site is built by D166, D168, E175, D201, N203, D205, E212, D242, N244, D246, K248, and E253. T254 bears the Phosphothreonine mark. Phosphoserine occurs at positions 261 and 277. Ca(2+)-binding residues include D278, N280, D282, K284, and E289. The short motif at 312-315 (HDEF) is the Prevents secretion from ER element.

Belongs to the CREC family. Interacts with GGCX.

It localises to the endoplasmic reticulum membrane. The protein localises to the golgi apparatus. Its subcellular location is the secreted. The protein resides in the melanosome. It is found in the sarcoplasmic reticulum lumen. Functionally, involved in regulation of vitamin K-dependent carboxylation of multiple N-terminal glutamate residues. Seems to inhibit gamma-carboxylase GGCX. Binds 7 calcium ions with a low affinity. The sequence is that of Calumenin (CALU) from Pongo abelii (Sumatran orangutan).